The primary structure comprises 140 residues: Nucleoside diphosphate kinase (140 aa).

6 residues coordinate ATP: lysine 11, phenylalanine 59, arginine 87, threonine 93, arginine 104, and asparagine 114. Histidine 117 acts as the Pros-phosphohistidine intermediate in catalysis.

Belongs to the NDK family. In terms of assembly, homotetramer. Requires Mg(2+) as cofactor.

The protein localises to the cytoplasm. The catalysed reaction is a 2'-deoxyribonucleoside 5'-diphosphate + ATP = a 2'-deoxyribonucleoside 5'-triphosphate + ADP. The enzyme catalyses a ribonucleoside 5'-diphosphate + ATP = a ribonucleoside 5'-triphosphate + ADP. Major role in the synthesis of nucleoside triphosphates other than ATP. The ATP gamma phosphate is transferred to the NDP beta phosphate via a ping-pong mechanism, using a phosphorylated active-site intermediate. This chain is Nucleoside diphosphate kinase, found in Rickettsia typhi (strain ATCC VR-144 / Wilmington).